Consider the following 201-residue polypeptide: Small ribosomal subunit protein uS4c (201 aa).

A disordered region spans residues 15–45 (LGDLPGLSRKAIKRSYPPGEHGQKSRKPSEY). Residues 35–45 (HGQKSRKPSEY) are compositionally biased toward basic and acidic residues. The region spanning 90–153 (MRLDNTVFRL…ASRKLVENYL (64 aa)) is the S4 RNA-binding domain.

Belongs to the universal ribosomal protein uS4 family. Part of the 30S ribosomal subunit. Contacts protein S5. The interaction surface between S4 and S5 is involved in control of translational fidelity.

The protein localises to the plastid. Its subcellular location is the chloroplast. One of the primary rRNA binding proteins, it binds directly to 16S rRNA where it nucleates assembly of the body of the 30S subunit. Functionally, with S5 and S12 plays an important role in translational accuracy. The polypeptide is Small ribosomal subunit protein uS4c (rps4) (Pyropia yezoensis (Susabi-nori)).